Reading from the N-terminus, the 219-residue chain is Small ribosomal subunit protein uS3c (219 aa).

The 78-residue stretch at 43 to 120 (IQNYIQKNMQ…KINITITKIT (78 aa)) folds into the KH type-2 domain.

It belongs to the universal ribosomal protein uS3 family. In terms of assembly, part of the 30S ribosomal subunit.

The protein resides in the plastid. It is found in the chloroplast. The sequence is that of Small ribosomal subunit protein uS3c (rps3) from Oenothera elata subsp. hookeri (Hooker's evening primrose).